A 78-amino-acid chain; its full sequence is Large ribosomal subunit protein bL28 (78 aa).

The segment at 1–30 (MAAHCQVTGAGPGFGHSISHSHRRTKRRFD) is disordered.

Belongs to the bacterial ribosomal protein bL28 family.

This is Large ribosomal subunit protein bL28 from Micrococcus luteus (strain ATCC 4698 / DSM 20030 / JCM 1464 / CCM 169 / CCUG 5858 / IAM 1056 / NBRC 3333 / NCIMB 9278 / NCTC 2665 / VKM Ac-2230) (Micrococcus lysodeikticus).